The sequence spans 1193 residues: Probable cation-transporting ATPase 13A4 (1193 aa).

Residues 1–32 (MGDHLEKSQHALLNEGDENEMEIFGYRTQGCR) lie on the Cytoplasmic side of the membrane. Residues 33–53 (KALCLIGSIFSLGMLPLVFYW) lie within the membrane without spanning it. Residues 54 to 198 (RPAWRVWANC…DVEITPIWKL (145 aa)) are Cytoplasmic-facing. Residues 199-219 (LIKEVLNPFYIFQLFSVCLWF) traverse the membrane as a helical segment. Residues 220–224 (SEDYK) lie on the Lumenal side of the membrane. A helical membrane pass occupies residues 225-245 (EYALAIILMSVISIALTVYDL). The Cytoplasmic segment spans residues 246-401 (RQQSVKLHHL…NFKLYRDAIR (156 aa)). The chain crosses the membrane as a helical span at residues 402-422 (FLLCLVGTATIGMVYTLCVYV). Topologically, residues 423–437 (LSGEPPEEVVRKALD) are lumenal. The chain crosses the membrane as a helical span at residues 438–458 (VITIAVPPALPAALTTGIIYA). Residues 459–901 (QRRLKKKGIF…KEGRAALVTS (443 aa)) are Cytoplasmic-facing. The active-site 4-aspartylphosphate intermediate is Asp487. The Mg(2+) site is built by Asp849 and Asp853. A helical membrane pass occupies residues 902-922 (FCMFKYMALYSMIQYVGVLLL). Over 923 to 933 (YWKTNSLSNYQ) the chain is Lumenal. A helical membrane pass occupies residues 934–954 (FLFQDLAITTLIGVTMNLNGA). Topologically, residues 955–973 (NPKLVPFRPAGRLISPPLL) are cytoplasmic. Residues 974–994 (LSVVLNILLSLAMHIVGFILV) form a helical membrane-spanning segment. Over 995-1036 (QKQPWYIMDYHSVCPVRNESASALAASPSVPEKTRSNSTFAS) the chain is Lumenal. A helical transmembrane segment spans residues 1037-1057 (FENTTIWFLGTINCIFVALVF). At 1058–1071 (SKGKPFRQPTYTNY) the chain is on the cytoplasmic side. The helical transmembrane segment at 1072 to 1092 (IFVLVLILQMGVCLFILFADI) threads the bilayer. Topologically, residues 1093–1105 (PEMHRRLDLLCTP) are lumenal. The helical transmembrane segment at 1106 to 1126 (VLWRVYILIMISSNFVVSLAV) threads the bilayer. The Cytoplasmic segment spans residues 1127–1193 (EKAIIENRAL…PVFESNEEQL (67 aa)).

The protein belongs to the cation transport ATPase (P-type) (TC 3.A.3) family. Type V subfamily. Expressed in brain and stomach.

Its subcellular location is the early endosome membrane. The protein localises to the late endosome membrane. It localises to the recycling endosome membrane. It catalyses the reaction ATP + H2O = ADP + phosphate + H(+). The chain is Probable cation-transporting ATPase 13A4 (Atp13a4) from Mus musculus (Mouse).